Here is a 21-residue protein sequence, read N- to C-terminus: Glucan endo-1,3-beta-glucosidase 2 (21 aa).

Positions 1–21 are disordered; the sequence is APGDLLWSDEFDGAAGSAPNP.

The enzyme catalyses Hydrolysis of (1-&gt;3)-beta-D-glucosidic linkages in (1-&gt;3)-beta-D-glucans.. In Papiliotrema laurentii (Cryptococcus laurentii), this protein is Glucan endo-1,3-beta-glucosidase 2.